A 110-amino-acid polypeptide reads, in one-letter code: UPF0122 protein RBAM_015800 (110 aa).

It belongs to the UPF0122 family.

In terms of biological role, might take part in the signal recognition particle (SRP) pathway. This is inferred from the conservation of its genetic proximity to ftsY/ffh. May be a regulatory protein. This Bacillus velezensis (strain DSM 23117 / BGSC 10A6 / LMG 26770 / FZB42) (Bacillus amyloliquefaciens subsp. plantarum) protein is UPF0122 protein RBAM_015800.